Reading from the N-terminus, the 208-residue chain is Ribosomal RNA large subunit methyltransferase E (208 aa).

S-adenosyl-L-methionine is bound by residues glycine 63, tryptophan 65, aspartate 83, aspartate 99, and aspartate 124. Residue lysine 164 is the Proton acceptor of the active site.

Belongs to the class I-like SAM-binding methyltransferase superfamily. RNA methyltransferase RlmE family.

It localises to the cytoplasm. The enzyme catalyses uridine(2552) in 23S rRNA + S-adenosyl-L-methionine = 2'-O-methyluridine(2552) in 23S rRNA + S-adenosyl-L-homocysteine + H(+). Specifically methylates the uridine in position 2552 of 23S rRNA at the 2'-O position of the ribose in the fully assembled 50S ribosomal subunit. This Alcanivorax borkumensis (strain ATCC 700651 / DSM 11573 / NCIMB 13689 / SK2) protein is Ribosomal RNA large subunit methyltransferase E.